An 806-amino-acid polypeptide reads, in one-letter code: Centrosomal protein of 85 kDa-like (806 aa).

Disordered stretches follow at residues 1–27 (MWGR…AGSD), 51–89 (NNHL…LSFK), and 101–146 (HVMP…SSLD). Serine 15 bears the Phosphoserine mark. Over residues 60–74 (TSDSGDTGIGTSCSD) the composition is skewed to polar residues. A compositionally biased stretch (basic and acidic residues) spans 135–146 (DHSRGERDSSLD). Serine 207 is modified (phosphoserine). Residues 308–353 (PLEGRTTDDSYSLAPWQQPQTEEFQQGSETPMQVLTGSSRQSYSPP) are disordered. Residues 322 to 351 (PWQQPQTEEFQQGSETPMQVLTGSSRQSYS) show a composition bias toward polar residues. Positions 442–644 (QEELEQKLAS…ILEIQSMQGK (203 aa)) form a coiled coil.

The protein belongs to the CEP85 family.

Its subcellular location is the cytoplasm. The protein resides in the cytoskeleton. It is found in the microtubule organizing center. The protein localises to the centrosome. Its function is as follows. Plays an essential role in neuronal cell migration. This is Centrosomal protein of 85 kDa-like from Mus musculus (Mouse).